A 128-amino-acid polypeptide reads, in one-letter code: Large ribosomal subunit protein uL24 (128 aa).

A disordered region spans residues 105–128 (KAKSRQVGKEKGKYKEETIEKMQE).

The protein belongs to the universal ribosomal protein uL24 family. Component of the large ribosomal subunit.

Its subcellular location is the cytoplasm. Component of the large ribosomal subunit. The ribosome is a large ribonucleoprotein complex responsible for the synthesis of proteins in the cell. This is Large ribosomal subunit protein uL24 (RPL26) from Gallus gallus (Chicken).